Consider the following 178-residue polypeptide: Large ribosomal subunit protein uL5 (178 aa).

Belongs to the universal ribosomal protein uL5 family. In terms of assembly, part of the 50S ribosomal subunit; part of the 5S rRNA/L5/L18/L25 subcomplex. Contacts the 5S rRNA and the P site tRNA. Forms a bridge to the 30S subunit in the 70S ribosome.

Functionally, this is one of the proteins that bind and probably mediate the attachment of the 5S RNA into the large ribosomal subunit, where it forms part of the central protuberance. In the 70S ribosome it contacts protein S13 of the 30S subunit (bridge B1b), connecting the 2 subunits; this bridge is implicated in subunit movement. Contacts the P site tRNA; the 5S rRNA and some of its associated proteins might help stabilize positioning of ribosome-bound tRNAs. This chain is Large ribosomal subunit protein uL5, found in Psychrobacter arcticus (strain DSM 17307 / VKM B-2377 / 273-4).